A 397-amino-acid chain; its full sequence is Ubiquitin-like modifier-activating enzyme 5 (397 aa).

5 residues coordinate ATP: glycine 77, aspartate 98, lysine 121, asparagine 144, and asparagine 178. Zn(2+) is bound by residues cysteine 220 and cysteine 223. The Glycyl thioester intermediate role is filled by cysteine 244. Positions 297 and 302 each coordinate Zn(2+). Residues 329-341 carry the UFM1-interacting sequence (UIS) motif; the sequence is VVHEDNDWGIELV. The tract at residues 342 to 372 is linker; sequence SEVSEEELKAASGPVPDLPEGIKVAYTIPIT. Residues 382-397 carry the UFC1-binding sequence (UFC) motif; the sequence is DSEQSLDELMAQMKNL.

It belongs to the ubiquitin-activating E1 family. UBA5 subfamily. In terms of assembly, homodimer; homodimerization is required for ufm1 activation. Interacts (via UIS motif) with ufm1; binds ufm1 via a trans-binding mechanism in which ufm1 interacts with distinct sites in both subunits of the uba5 homodimer. Interacts (via C-terminus) with ufc1.

It localises to the cytoplasm. The protein resides in the nucleus. Its subcellular location is the endoplasmic reticulum membrane. It is found in the golgi apparatus. Functionally, E1-like enzyme which specifically catalyzes the first step in ufmylation. Activates ufm1 by first adenylating its C-terminal glycine residue with ATP, and thereafter linking this residue to the side chain of a cysteine residue in E1, yielding a ufm1-E1 thioester and free AMP. Activates ufm1 via a trans-binding mechanism, in which ufm1 interacts with distinct sites in both subunits of the uba5 homodimer. Trans-binding also promotes stabilization of the uba5 homodimer, and enhances ATP-binding. Transfer of ufm1 from uba5 to the E2-like enzyme UFC1 also takes place using a trans mechanism. Ufmylation plays a key role in various processes, such as ribosome recycling, response to DNA damage, interferon response or reticulophagy (also called ER-phagy). In Xenopus laevis (African clawed frog), this protein is Ubiquitin-like modifier-activating enzyme 5.